The sequence spans 226 residues: Leucyl/phenylalanyl-tRNA--protein transferase (226 aa).

Belongs to the L/F-transferase family.

The protein localises to the cytoplasm. The enzyme catalyses N-terminal L-lysyl-[protein] + L-leucyl-tRNA(Leu) = N-terminal L-leucyl-L-lysyl-[protein] + tRNA(Leu) + H(+). The catalysed reaction is N-terminal L-arginyl-[protein] + L-leucyl-tRNA(Leu) = N-terminal L-leucyl-L-arginyl-[protein] + tRNA(Leu) + H(+). It catalyses the reaction L-phenylalanyl-tRNA(Phe) + an N-terminal L-alpha-aminoacyl-[protein] = an N-terminal L-phenylalanyl-L-alpha-aminoacyl-[protein] + tRNA(Phe). In terms of biological role, functions in the N-end rule pathway of protein degradation where it conjugates Leu, Phe and, less efficiently, Met from aminoacyl-tRNAs to the N-termini of proteins containing an N-terminal arginine or lysine. This Pseudomonas putida (strain ATCC 47054 / DSM 6125 / CFBP 8728 / NCIMB 11950 / KT2440) protein is Leucyl/phenylalanyl-tRNA--protein transferase.